The chain runs to 133 residues: p53 and DNA damage-regulated protein 1 (133 aa).

Belongs to the prefoldin subunit beta family. In terms of assembly, component of the PAQosome complex which is responsible for the biogenesis of several protein complexes and which consists of R2TP complex members RUVBL1, RUVBL2, RPAP3 and PIH1D1, URI complex members PFDN2, PFDN6, PDRG1, UXT and URI1 as well as ASDURF, POLR2E and DNAAF10/WDR92.

It localises to the cytoplasm. May play a role in chaperone-mediated protein folding. This Rattus norvegicus (Rat) protein is p53 and DNA damage-regulated protein 1 (Pdrg1).